The primary structure comprises 134 residues: UPF0412 protein YaaI (134 aa).

Residues 1–23 (MRSVLTISVGLLFGLALSSVAHA) form the signal peptide.

The protein belongs to the UPF0412 family.

This chain is UPF0412 protein YaaI, found in Salmonella paratyphi A (strain ATCC 9150 / SARB42).